The following is a 453-amino-acid chain: Pup--protein ligase (453 aa).

E9 lines the Mg(2+) pocket. Position 53 (R53) interacts with ATP. Mg(2+) is bound at residue Y55. D57 acts as the Proton acceptor in catalysis. Mg(2+) is bound at residue E63. ATP is bound by residues T66 and W420.

The protein belongs to the Pup ligase/Pup deamidase family. Pup-conjugating enzyme subfamily.

The enzyme catalyses ATP + [prokaryotic ubiquitin-like protein]-L-glutamate + [protein]-L-lysine = ADP + phosphate + N(6)-([prokaryotic ubiquitin-like protein]-gamma-L-glutamyl)-[protein]-L-lysine.. The protein operates within protein degradation; proteasomal Pup-dependent pathway. Its pathway is protein modification; protein pupylation. Its function is as follows. Catalyzes the covalent attachment of the prokaryotic ubiquitin-like protein modifier Pup to the proteasomal substrate proteins, thereby targeting them for proteasomal degradation. This tagging system is termed pupylation. The ligation reaction involves the side-chain carboxylate of the C-terminal glutamate of Pup and the side-chain amino group of a substrate lysine. This Nocardioides sp. (strain ATCC BAA-499 / JS614) protein is Pup--protein ligase.